The primary structure comprises 1158 residues: ATP-dependent helicase/deoxyribonuclease subunit B (1158 aa).

An ATP-binding site is contributed by 8-15 (GRAGTGKS). Residues cysteine 791, cysteine 1112, cysteine 1115, and cysteine 1121 each coordinate [4Fe-4S] cluster.

Belongs to the helicase family. AddB/RexB type 1 subfamily. In terms of assembly, heterodimer of AddA and AddB. Requires Mg(2+) as cofactor. [4Fe-4S] cluster is required as a cofactor.

The heterodimer acts as both an ATP-dependent DNA helicase and an ATP-dependent, dual-direction single-stranded exonuclease. Recognizes the chi site generating a DNA molecule suitable for the initiation of homologous recombination. The AddB subunit has 5' -&gt; 3' nuclease activity but not helicase activity. The protein is ATP-dependent helicase/deoxyribonuclease subunit B of Clostridium perfringens (strain ATCC 13124 / DSM 756 / JCM 1290 / NCIMB 6125 / NCTC 8237 / Type A).